The primary structure comprises 137 residues: Transcription antitermination protein NusB (137 aa).

The protein belongs to the NusB family.

Its function is as follows. Involved in transcription antitermination. Required for transcription of ribosomal RNA (rRNA) genes. Binds specifically to the boxA antiterminator sequence of the ribosomal RNA (rrn) operons. In Proteus mirabilis (strain HI4320), this protein is Transcription antitermination protein NusB.